Here is a 348-residue protein sequence, read N- to C-terminus: D-alanine--D-alanine ligase (348 aa).

One can recognise an ATP-grasp domain in the interval Lys-132–Met-334. Leu-162–Glu-217 lines the ATP pocket. Mg(2+) contacts are provided by Asp-288, Glu-301, and Asn-303.

Belongs to the D-alanine--D-alanine ligase family. Mg(2+) is required as a cofactor. The cofactor is Mn(2+).

It is found in the cytoplasm. It carries out the reaction 2 D-alanine + ATP = D-alanyl-D-alanine + ADP + phosphate + H(+). It functions in the pathway cell wall biogenesis; peptidoglycan biosynthesis. Its function is as follows. Cell wall formation. The protein is D-alanine--D-alanine ligase of Streptococcus agalactiae serotype Ia (strain ATCC 27591 / A909 / CDC SS700).